The primary structure comprises 622 residues: Probable potassium transport system protein Kup 1 (622 aa).

Helical transmembrane passes span 7–27 (LLVL…TSPL), 50–70 (LISL…VLFL), 96–116 (TAIL…DAMI), 132–152 (VTPA…LLLF), 165–185 (FFGP…FVHI), 210–230 (VGIV…ALYA), 244–264 (WFTV…AFVL), 282–302 (ALLP…QAVI), 334–354 (IYLP…VFLF), 360–380 (LATA…VLSF), 391–411 (TWWA…FLGA), and 416–436 (IHDG…IMWT).

The protein belongs to the HAK/KUP transporter (TC 2.A.72) family.

The protein resides in the cell inner membrane. The catalysed reaction is K(+)(in) + H(+)(in) = K(+)(out) + H(+)(out). Transport of potassium into the cell. Likely operates as a K(+):H(+) symporter. This is Probable potassium transport system protein Kup 1 from Rhizobium meliloti (strain 1021) (Ensifer meliloti).